Reading from the N-terminus, the 374-residue chain is MKRQNVRTLSLIICTFTYLLVGAAVFDALESDYEMREEEKLKAEEIRLKGKYNISSEDYRQLELVIMQSEPHRAGVQWKFAGSFYFAITVITTIGYGHAAPGTDAGKAFCMFYAVLGIPLTLVMFQSLGERMNTFVKYLLKRIKKCCGMHSTDVSMENMVTVGFFSCMGTLCIGAAAFSHYEEWSFFQAYYYCFITLTTIGFGDYVALQKNRALQKKPLYVAFSFMYILVGLTVIGAFLNLVVLRFLTMNSEDERRDAEERASLAGNRNSMIIHIQEDTPHGRQRYKAEVTDLQSVCSCMCYRSHEYTSRMVSHQNSFSSKLNPQYFHSISYKIEEISPSTLKNSLFPSPVSSVSPGLHSFTDKHRLMKRRKSI.

Topologically, residues 1 to 8 are cytoplasmic; the sequence is MKRQNVRT. Residues 9–29 traverse the membrane as a helical segment; it reads LSLIICTFTYLLVGAAVFDAL. The Extracellular portion of the chain corresponds to 30–88; it reads ESDYEMREEEKLKAEEIRLKGKYNISSEDYRQLELVIMQSEPHRAGVQWKFAGSFYFAI. Asn-53 carries N-linked (GlcNAc...) asparagine glycosylation. Positions 89–101 form an intramembrane region, pore-forming; it reads TVITTIGYGHAAP. Residues 102–107 lie on the Extracellular side of the membrane; it reads GTDAGK. The chain crosses the membrane as a helical span at residues 108–128; sequence AFCMFYAVLGIPLTLVMFQSL. Residues 129–158 are Cytoplasmic-facing; the sequence is GERMNTFVKYLLKRIKKCCGMHSTDVSMEN. The helical transmembrane segment at 159–179 threads the bilayer; it reads MVTVGFFSCMGTLCIGAAAFS. The Extracellular portion of the chain corresponds to 180-194; it reads HYEEWSFFQAYYYCF. The pore-forming intramembrane region spans 195-207; it reads ITLTTIGFGDYVA. The Extracellular segment spans residues 208–218; the sequence is LQKNRALQKKP. Residues 219–239 traverse the membrane as a helical segment; that stretch reads LYVAFSFMYILVGLTVIGAFL. The Cytoplasmic portion of the chain corresponds to 240–374; the sequence is NLVVLRFLTM…HRLMKRRKSI (135 aa).

This sequence belongs to the two pore domain potassium channel (TC 1.A.1.8) family. In terms of assembly, homodimer. May form heterodimers with other family members.

The protein localises to the cell membrane. PH-dependent, voltage-insensitive, background potassium channel protein. The polypeptide is Potassium channel subfamily K member 9 (kcnk9) (Xenopus laevis (African clawed frog)).